The sequence spans 654 residues: Heat shock 70 kDa protein 2 (654 aa).

Residues alanine 612–aspartate 646 are compositionally biased toward gly residues. The interval alanine 612 to aspartate 654 is disordered.

This sequence belongs to the heat shock protein 70 family.

The polypeptide is Heat shock 70 kDa protein 2 (HSP70-2) (Paracoccidioides lutzii (strain ATCC MYA-826 / Pb01) (Paracoccidioides brasiliensis)).